Here is a 346-residue protein sequence, read N- to C-terminus: Phosphoribosylformylglycinamidine cyclo-ligase (346 aa).

The protein belongs to the AIR synthase family.

It is found in the cytoplasm. The catalysed reaction is 2-formamido-N(1)-(5-O-phospho-beta-D-ribosyl)acetamidine + ATP = 5-amino-1-(5-phospho-beta-D-ribosyl)imidazole + ADP + phosphate + H(+). It participates in purine metabolism; IMP biosynthesis via de novo pathway; 5-amino-1-(5-phospho-D-ribosyl)imidazole from N(2)-formyl-N(1)-(5-phospho-D-ribosyl)glycinamide: step 2/2. The chain is Phosphoribosylformylglycinamidine cyclo-ligase from Prochlorococcus marinus (strain NATL1A).